Here is a 596-residue protein sequence, read N- to C-terminus: Pentatricopeptide repeat-containing protein At1g80270, mitochondrial (596 aa).

Residues 1–69 (MFALSKVLRR…RALSSSAGTK (69 aa)) constitute a mitochondrion transit peptide. Residues 62 to 119 (LSSSAGTKSDQEEDDLEDGFSELEGSKSGQGSTSSDEDEGKLSADEEEEEELDLIETD) form a disordered region. 2 stretches are compositionally biased toward acidic residues: residues 72-82 (QEEDDLEDGFS) and 96-117 (SDED…DLIE). PPR repeat units lie at residues 228–262 (GEVL…GFPL), 263–296 (SGFT…NIKP), 297–331 (SLLT…GVEL), 332–366 (DFQT…SLEA), 367–397 (NRRA…CESK), 399–433 (YFEE…DRRA), 434–468 (SSST…GCRI), 469–503 (EATT…SHTK), and 505–539 (MMNS…GYTS).

The protein belongs to the PPR family. P subfamily.

Its subcellular location is the mitochondrion. This chain is Pentatricopeptide repeat-containing protein At1g80270, mitochondrial, found in Arabidopsis thaliana (Mouse-ear cress).